A 20-amino-acid polypeptide reads, in one-letter code: Basic phospholipase A2 cannitoxin alpha chain (20 aa).

As to quaternary structure, heterotrimer of alpha, beta, and gamma chains; non-covalently linked. It depends on Ca(2+) as a cofactor. As to expression, expressed by the venom gland.

It is found in the secreted. The enzyme catalyses a 1,2-diacyl-sn-glycero-3-phosphocholine + H2O = a 1-acyl-sn-glycero-3-phosphocholine + a fatty acid + H(+). Heterotrimer: Snake venom phospholipase A2 (PLA2) heterotrimer that acts as a potent presynaptic neurotoxin by blocking synaptic transmission and synaptic vesicle recycling. Enzymatic activity is essential for the neurotoxic effects. May act by binding in a calcium-dependent fashion to neurotonal pentraxin-1 (NPTX1) and neurotonal pentraxin-2 (NPTX2), but not to neuronal pentraxin receptor (NPTXR). Also binds to taipoxin-associated calcium binding protein 49 (RCN2), a protein localized in the lumen of endoplasmic reticulum. Functionally, monomer (alpha chain): Snake venom phospholipase A2 (PLA2) that possesses a low level of presynaptic activity and the same high enzymatic activity than the heterotrimer. PLA2 catalyzes the calcium-dependent hydrolysis of the 2-acyl groups in 3-sn-phosphoglycerides. The protein is Basic phospholipase A2 cannitoxin alpha chain of Oxyuranus scutellatus canni (Papuan taipan).